A 487-amino-acid polypeptide reads, in one-letter code: ATP-dependent 6-phosphofructokinase (487 aa).

ATP is bound by residues Gly-107, 173-174, 198-201, and Lys-226; these read RG and GDGT. Position 199 (Asp-199) interacts with Mg(2+). Substrate is bound by residues 227–229, 272–274, and Glu-325; these read TID and MGR. Catalysis depends on Asp-229, which acts as the Proton acceptor. An ATP-binding site is contributed by 341 to 343; sequence SGN. 380 to 383 provides a ligand contact to substrate; it reads YMIR. The short motif at 485–487 is the Peroxisomal targeting signal element; that stretch reads AKL.

It belongs to the phosphofructokinase type A (PFKA) family. PPi-dependent PFK group II subfamily. Atypical ATP-dependent clade 'X' sub-subfamily. In terms of assembly, homotetramer. Mg(2+) is required as a cofactor.

It is found in the glycosome. It carries out the reaction beta-D-fructose 6-phosphate + ATP = beta-D-fructose 1,6-bisphosphate + ADP + H(+). The protein operates within carbohydrate degradation; glycolysis; D-glyceraldehyde 3-phosphate and glycerone phosphate from D-glucose: step 3/4. Allosterically activated by AMP. In terms of biological role, catalyzes the phosphorylation of D-fructose 6-phosphate to fructose 1,6-bisphosphate by ATP, the first committing step of glycolysis. The chain is ATP-dependent 6-phosphofructokinase from Trypanosoma brucei brucei.